The following is a 305-amino-acid chain: Carbamate kinase (305 aa).

Belongs to the carbamate kinase family.

It is found in the cytoplasm. It carries out the reaction hydrogencarbonate + NH4(+) + ATP = carbamoyl phosphate + ADP + H2O + H(+). Its pathway is metabolic intermediate metabolism; carbamoyl phosphate degradation; CO(2) and NH(3) from carbamoyl phosphate: step 1/1. The polypeptide is Carbamate kinase (arcC) (Thermoplasma acidophilum (strain ATCC 25905 / DSM 1728 / JCM 9062 / NBRC 15155 / AMRC-C165)).